The following is a 488-amino-acid chain: uncharacterized protein (488 aa).

This sequence belongs to the protein kinase superfamily. ADCK protein kinase family.

This is an uncharacterized protein from Mycobacterium tuberculosis (strain CDC 1551 / Oshkosh).